A 222-amino-acid polypeptide reads, in one-letter code: Eukaryotic translation initiation factor 3 subunit K (222 aa).

Residues 46 to 208 (YDLEANLAVL…KIKTKNITEK (163 aa)) enclose the PCI domain.

This sequence belongs to the eIF-3 subunit K family. As to quaternary structure, component of the eukaryotic translation initiation factor 3 (eIF-3) complex. The eIF-3 complex interacts with pix.

The protein localises to the cytoplasm. Component of the eukaryotic translation initiation factor 3 (eIF-3) complex, which is involved in protein synthesis of a specialized repertoire of mRNAs and, together with other initiation factors, stimulates binding of mRNA and methionyl-tRNAi to the 40S ribosome. The eIF-3 complex specifically targets and initiates translation of a subset of mRNAs involved in cell proliferation. The chain is Eukaryotic translation initiation factor 3 subunit K from Drosophila ananassae (Fruit fly).